The chain runs to 567 residues: Urease subunit alpha (567 aa).

Positions 129–567 constitute a Urease domain; it reads GGIDTHIHWI…LPMAQRYFLF (439 aa). Ni(2+)-binding residues include H134, H136, and K217. K217 bears the N6-carboxylysine mark. Substrate is bound at residue H219. H246 and H272 together coordinate Ni(2+). The active-site Proton donor is the H320. D360 lines the Ni(2+) pocket.

The protein belongs to the metallo-dependent hydrolases superfamily. Urease alpha subunit family. As to quaternary structure, heterotrimer of UreA (gamma), UreB (beta) and UreC (alpha) subunits. Three heterotrimers associate to form the active enzyme. The apoenzyme interacts with an accessory complex composed of UreD, UreF and UreG, which is required for the assembly of the nickel containing metallocenter of UreC. The UreE protein may also play a direct role as a metallochaperone in nickel transfer to the urease apoprotein. Requires Ni cation as cofactor. Post-translationally, carboxylation allows a single lysine to coordinate two nickel ions.

It is found in the cytoplasm. It catalyses the reaction urea + 2 H2O + H(+) = hydrogencarbonate + 2 NH4(+). The protein operates within nitrogen metabolism; urea degradation; CO(2) and NH(3) from urea (urease route): step 1/1. With respect to regulation, the apoenzyme can be activated in vitro in the presence of nickel ions and carbon dioxide, which promotes carboxylation of Lys-217. In Klebsiella aerogenes (Enterobacter aerogenes), this protein is Urease subunit alpha.